Here is an 89-residue protein sequence, read N- to C-terminus: Small ribosomal subunit protein uS15 (89 aa).

The interval 1 to 23 (MTLNTQEKQKLINTHQNHGTDTG) is disordered.

Belongs to the universal ribosomal protein uS15 family. In terms of assembly, part of the 30S ribosomal subunit. Forms a bridge to the 50S subunit in the 70S ribosome, contacting the 23S rRNA.

One of the primary rRNA binding proteins, it binds directly to 16S rRNA where it helps nucleate assembly of the platform of the 30S subunit by binding and bridging several RNA helices of the 16S rRNA. Functionally, forms an intersubunit bridge (bridge B4) with the 23S rRNA of the 50S subunit in the ribosome. In Prochlorococcus marinus (strain MIT 9211), this protein is Small ribosomal subunit protein uS15.